Reading from the N-terminus, the 451-residue chain is MKGTIVLYPAMGRGHIVPMVELGKFLSTHHHATLSVKILLPSPPNSTTLRYITAVSAATPSITFLHLSPSQHLLRVLQTLISQSSKPKAFILDFFNHSAADVTQTLNIPTYYYFPNAASCVALMLYTPTIHHNTKNGNSSYNDTLRRIPGLPPLSPEDMPAPLLDRRSFESFANMSIQMRKSDGIIVNTFEKLENKAFLALKNGTCVSETSRSHSSTPETRKPRIFCVGPLVSNGGGEHDNDDSGCMSWLDLQPSRTVVFLSFGSYGRFSKSQIREIALGLERSGQRFLWVVRDPYERSELSLEELLPKGFLERTKERGMVVKNWAPQVKVLSHDSVGGFVTHCGWNSVLEAVSWGVPMVAWPLYAEQRLNRVVMVEEMKVALPLKEVDEDGFVRASELEERVRELMDSERGRGKEVRKRVLGATNDAVAALSDGGSSRIELNDLVGLWMQ.

Catalysis depends on His-15, which acts as the Proton acceptor. His-15 is a binding site for an anthocyanidin. The active-site Charge relay is the Asp-93. 7 residues coordinate UDP-alpha-D-glucose: Ala-326, Gln-328, His-343, Trp-346, Asn-347, Ser-348, and Glu-351. Ala-366 contacts an anthocyanidin. The UDP-alpha-D-glucose site is built by Glu-367 and Gln-368.

It belongs to the UDP-glycosyltransferase family. Expressed in roots. Detected in stems and leaves.

The catalysed reaction is a 7-hydroxyisoflavone + UDP-alpha-D-glucose = a 7-hydroxyisoflavone 7-O-beta-D-glucoside + UDP + H(+). In terms of biological role, isoflavone 7-O-glucosyltransferase converting daidzein to daidzin, genistein to genistin and formononetin to ononin. Shows some activity toward the flavanones liquiritigenin and naringenin, but not toward cyanidin, isoliquiritigenin, apigenin, luteolin, kaempferol, quercetin, daidzin and puerarin. The polypeptide is UDP-glycosyltransferase 13 (Pueraria montana var. lobata (Kudzu vine)).